The following is a 213-amino-acid chain: Octanoyltransferase (213 aa).

The BPL/LPL catalytic domain maps to 32-207; sequence NSTLDEIWLV…NILALLNNPD (176 aa). Residues 71-78, 138-140, and 151-153 each bind substrate; these read RGGQVTYH, SLG, and GLA. The active-site Acyl-thioester intermediate is the C169.

It belongs to the LipB family.

Its subcellular location is the cytoplasm. It carries out the reaction octanoyl-[ACP] + L-lysyl-[protein] = N(6)-octanoyl-L-lysyl-[protein] + holo-[ACP] + H(+). It functions in the pathway protein modification; protein lipoylation via endogenous pathway; protein N(6)-(lipoyl)lysine from octanoyl-[acyl-carrier-protein]: step 1/2. Catalyzes the transfer of endogenously produced octanoic acid from octanoyl-acyl-carrier-protein onto the lipoyl domains of lipoate-dependent enzymes. Lipoyl-ACP can also act as a substrate although octanoyl-ACP is likely to be the physiological substrate. The chain is Octanoyltransferase from Shigella flexneri serotype 5b (strain 8401).